We begin with the raw amino-acid sequence, 330 residues long: Phospho-N-acetylmuramoyl-pentapeptide-transferase (330 aa).

The next 10 membrane-spanning stretches (helical) occupy residues 3-23 (SVVL…SSFI), 49-69 (TPTM…AVVA), 71-91 (PNPA…VGLY), 111-131 (FLLL…YVGV), 145-165 (VLGP…FVIV), 179-199 (GLAA…AFLE), 204-224 (LAII…YNSH), 228-248 (IFMG…AAIL), 256-276 (PVIG…VVVF), and 307-327 (FWIV…FFLY).

This sequence belongs to the glycosyltransferase 4 family. MraY subfamily. Mg(2+) is required as a cofactor.

The protein resides in the cell membrane. The enzyme catalyses UDP-N-acetyl-alpha-D-muramoyl-L-alanyl-gamma-D-glutamyl-meso-2,6-diaminopimeloyl-D-alanyl-D-alanine + di-trans,octa-cis-undecaprenyl phosphate = di-trans,octa-cis-undecaprenyl diphospho-N-acetyl-alpha-D-muramoyl-L-alanyl-D-glutamyl-meso-2,6-diaminopimeloyl-D-alanyl-D-alanine + UMP. It functions in the pathway cell wall biogenesis; peptidoglycan biosynthesis. Its function is as follows. Catalyzes the initial step of the lipid cycle reactions in the biosynthesis of the cell wall peptidoglycan: transfers peptidoglycan precursor phospho-MurNAc-pentapeptide from UDP-MurNAc-pentapeptide onto the lipid carrier undecaprenyl phosphate, yielding undecaprenyl-pyrophosphoryl-MurNAc-pentapeptide, known as lipid I. This is Phospho-N-acetylmuramoyl-pentapeptide-transferase from Rubrobacter xylanophilus (strain DSM 9941 / JCM 11954 / NBRC 16129 / PRD-1).